We begin with the raw amino-acid sequence, 159 residues long: Ribosomal RNA large subunit methyltransferase H (159 aa).

S-adenosyl-L-methionine contacts are provided by residues leucine 76, glycine 108, and 127-132 (FSKMTF).

The protein belongs to the RNA methyltransferase RlmH family. Homodimer.

It is found in the cytoplasm. The enzyme catalyses pseudouridine(1915) in 23S rRNA + S-adenosyl-L-methionine = N(3)-methylpseudouridine(1915) in 23S rRNA + S-adenosyl-L-homocysteine + H(+). Its function is as follows. Specifically methylates the pseudouridine at position 1915 (m3Psi1915) in 23S rRNA. This is Ribosomal RNA large subunit methyltransferase H from Exiguobacterium sp. (strain ATCC BAA-1283 / AT1b).